Reading from the N-terminus, the 279-residue chain is Thiazole synthase (279 aa).

Residue Lys116 is the Schiff-base intermediate with DXP of the active site. 1-deoxy-D-xylulose 5-phosphate is bound by residues Gly177, 203 to 204 (AG), and 225 to 226 (NS).

Belongs to the ThiG family. In terms of assembly, homotetramer. Forms heterodimers with either ThiH or ThiS.

It is found in the cytoplasm. The enzyme catalyses [ThiS sulfur-carrier protein]-C-terminal-Gly-aminoethanethioate + 2-iminoacetate + 1-deoxy-D-xylulose 5-phosphate = [ThiS sulfur-carrier protein]-C-terminal Gly-Gly + 2-[(2R,5Z)-2-carboxy-4-methylthiazol-5(2H)-ylidene]ethyl phosphate + 2 H2O + H(+). It participates in cofactor biosynthesis; thiamine diphosphate biosynthesis. Functionally, catalyzes the rearrangement of 1-deoxy-D-xylulose 5-phosphate (DXP) to produce the thiazole phosphate moiety of thiamine. Sulfur is provided by the thiocarboxylate moiety of the carrier protein ThiS. In vitro, sulfur can be provided by H(2)S. This is Thiazole synthase from Trichodesmium erythraeum (strain IMS101).